Reading from the N-terminus, the 711-residue chain is Amyloid beta precursor protein binding family B member 1 (711 aa).

Serine 135 is modified (phosphoserine). 3 disordered regions span residues 140 to 257 (NTQG…SDLP), 277 to 300 (GTTQWEPPGRASPSQGNSPQEESQ), and 321 to 364 (EPSE…QRNA). Positions 156-174 (EVEEEDEDEEEEDEEEEDL) are enriched in acidic residues. The residue at position 205 (lysine 205) is an N6-acetyllysine. Over residues 224 to 235 (SWATLSQGSPSY) the composition is skewed to polar residues. The WW domain maps to 254–286 (SDLPAGWMRVQDTSGTYYWHIPTGTTQWEPPGR). The span at 288–300 (SPSQGNSPQEESQ) shows a compositional bias: polar residues. PID domains lie at 365–533 (NPGI…QVEF) and 538–700 (NELV…LWGS). A Phosphoserine; by PKC modification is found at serine 460. At serine 518 the chain carries Phosphoserine. Position 548 is a phosphotyrosine; by ABL1 (tyrosine 548). Serine 611 is subject to Phosphoserine; by SGK1. The residue at position 702 (lysine 702) is an N6-acetyllysine.

In terms of assembly, component of a complex, at least composed of APBB1, RASD1/DEXRAS1 and APP. Interacts (via PID domain 2) with APP (with the intracellular domain of the amyloid-beta precursor protein). Interacts (via PID domain 2) with RASD1/DEXRAS1; impairs the transcription activation activity. Interacts (via PID domain 1) with KAT5/TIP60. Interacts (via the WW domain) with the proline-rich region of APBB1IP. Interacts with TSHZ1 and TSHZ2. Interacts (via the WW domain) with histone H2AX (when phosphorylated on 'Tyr-142') and the proline-rich region of ENAH. Interacts with MAPK8. Interacts (via PID domain 1) with TSHZ3 (via homeobox domain). Interacts with SET. Found in a trimeric complex with HDAC1 and TSHZ3; the interaction between HDAC1 and APBB1 is mediated by TSHZ3. Interacts (via WWW domain) with NEK6. Interacts (via WWW domain) with ABL1. Interacts with RNF157. Interacts with ARF6. In terms of processing, polyubiquitination by RNF157 leads to degradation by the proteasome. Phosphorylation at Ser-611 by SGK1 promotes its localization to the nucleus. Phosphorylated following nuclear translocation. Phosphorylation at Tyr-547 by ABL1 enhances transcriptional activation activity and reduces the affinity for RASD1/DEXRAS1. Phosphorylated at Ser-460 by PKC upon insulin activation. Post-translationally, acetylation at Lys-205 and Lys-702 by KAT5 promotes its transcription activator activity. Brain, not in liver, very low in other tissues. The long (neuron-specific) form is expressed only in brain.

It is found in the cell membrane. It localises to the cytoplasm. The protein resides in the nucleus. The protein localises to the cell projection. Its subcellular location is the growth cone. It is found in the nucleus speckle. Functionally, transcription coregulator that can have both coactivator and corepressor functions. Adapter protein that forms a transcriptionally active complex with the gamma-secretase-derived amyloid precursor protein (APP) intracellular domain. Plays a central role in the response to DNA damage by translocating to the nucleus and inducing apoptosis. May act by specifically recognizing and binding histone H2AX phosphorylated on 'Tyr-142' (H2AXY142ph) at double-strand breaks (DSBs), recruiting other pro-apoptosis factors such as MAPK8/JNK1. Required for histone H4 acetylation at double-strand breaks (DSBs). Its ability to specifically bind modified histones and chromatin modifying enzymes such as KAT5/TIP60, probably explains its transcription activation activity. Functions in association with TSHZ3, SET and HDAC factors as a transcriptional repressor, that inhibits the expression of CASP4. Associates with chromatin in a region surrounding the CASP4 transcriptional start site(s). Involved in hippocampal neurite branching and neuromuscular junction formation, as a result plays a role in spatial memory functioning. Plays a role in the maintenance of lens transparency. May play a role in muscle cell strength. Acts as a molecular adapter that functions in neurite outgrowth by activating the RAC1-ARF6 axis upon insulin treatment. This Rattus norvegicus (Rat) protein is Amyloid beta precursor protein binding family B member 1.